We begin with the raw amino-acid sequence, 401 residues long: Carbamoyl phosphate synthase small chain (401 aa).

Residues 1–203 (MTATPAWTIQ…EGYSTLGETD (203 aa)) form a CPSase region. Residues Ser56, Gly255, and Gly257 each contribute to the L-glutamine site. The Glutamine amidotransferase type-1 domain maps to 207-395 (HVVALDYGVK…LNLIREKKGE (189 aa)). The Nucleophile role is filled by Cys284. L-glutamine contacts are provided by Leu285, Gln288, Asn326, Gly328, and Phe329. Active-site residues include His368 and Glu370.

The protein belongs to the CarA family. Composed of two chains; the small (or glutamine) chain promotes the hydrolysis of glutamine to ammonia, which is used by the large (or ammonia) chain to synthesize carbamoyl phosphate. Tetramer of heterodimers (alpha,beta)4.

It catalyses the reaction hydrogencarbonate + L-glutamine + 2 ATP + H2O = carbamoyl phosphate + L-glutamate + 2 ADP + phosphate + 2 H(+). It carries out the reaction L-glutamine + H2O = L-glutamate + NH4(+). It participates in amino-acid biosynthesis; L-arginine biosynthesis; carbamoyl phosphate from bicarbonate: step 1/1. The protein operates within pyrimidine metabolism; UMP biosynthesis via de novo pathway; (S)-dihydroorotate from bicarbonate: step 1/3. Its function is as follows. Small subunit of the glutamine-dependent carbamoyl phosphate synthetase (CPSase). CPSase catalyzes the formation of carbamoyl phosphate from the ammonia moiety of glutamine, carbonate, and phosphate donated by ATP, constituting the first step of 2 biosynthetic pathways, one leading to arginine and/or urea and the other to pyrimidine nucleotides. The small subunit (glutamine amidotransferase) binds and cleaves glutamine to supply the large subunit with the substrate ammonia. This Rhizobium meliloti (strain 1021) (Ensifer meliloti) protein is Carbamoyl phosphate synthase small chain.